Consider the following 281-residue polypeptide: Bis(5'-nucleosyl)-tetraphosphatase, symmetrical (281 aa).

The protein belongs to the Ap4A hydrolase family.

The enzyme catalyses P(1),P(4)-bis(5'-adenosyl) tetraphosphate + H2O = 2 ADP + 2 H(+). In terms of biological role, hydrolyzes diadenosine 5',5'''-P1,P4-tetraphosphate to yield ADP. The sequence is that of Bis(5'-nucleosyl)-tetraphosphatase, symmetrical from Pectobacterium atrosepticum (strain SCRI 1043 / ATCC BAA-672) (Erwinia carotovora subsp. atroseptica).